A 256-amino-acid polypeptide reads, in one-letter code: D-aminoacyl-tRNA deacylase (256 aa).

This sequence belongs to the DtdA deacylase family. As to quaternary structure, monomer. The cofactor is Zn(2+).

The enzyme catalyses a D-aminoacyl-tRNA + H2O = a tRNA + a D-alpha-amino acid + H(+). The catalysed reaction is glycyl-tRNA(Ala) + H2O = tRNA(Ala) + glycine + H(+). Functionally, D-aminoacyl-tRNA deacylase with broad substrate specificity. By recycling D-aminoacyl-tRNA to D-amino acids and free tRNA molecules, this enzyme counteracts the toxicity associated with the formation of D-aminoacyl-tRNA entities in vivo. This Thermoplasma acidophilum (strain ATCC 25905 / DSM 1728 / JCM 9062 / NBRC 15155 / AMRC-C165) protein is D-aminoacyl-tRNA deacylase.